Consider the following 189-residue polypeptide: HGPRTase-like protein (189 aa).

It belongs to the purine/pyrimidine phosphoribosyltransferase family. Archaeal HPRT subfamily.

In terms of biological role, may catalyze a purine salvage reaction, the substrate is unknown. The chain is HGPRTase-like protein from Natronomonas pharaonis (strain ATCC 35678 / DSM 2160 / CIP 103997 / JCM 8858 / NBRC 14720 / NCIMB 2260 / Gabara) (Halobacterium pharaonis).